Reading from the N-terminus, the 437-residue chain is ATP-dependent protease ATPase subunit HslU (437 aa).

ATP contacts are provided by residues Val18, 60–65 (GCGKTE), Asp250, Glu315, and Arg387.

Belongs to the ClpX chaperone family. HslU subfamily. As to quaternary structure, a double ring-shaped homohexamer of HslV is capped on each side by a ring-shaped HslU homohexamer. The assembly of the HslU/HslV complex is dependent on binding of ATP.

The protein resides in the cytoplasm. Functionally, ATPase subunit of a proteasome-like degradation complex; this subunit has chaperone activity. The binding of ATP and its subsequent hydrolysis by HslU are essential for unfolding of protein substrates subsequently hydrolyzed by HslV. HslU recognizes the N-terminal part of its protein substrates and unfolds these before they are guided to HslV for hydrolysis. In Methylobacterium sp. (strain 4-46), this protein is ATP-dependent protease ATPase subunit HslU.